Reading from the N-terminus, the 170-residue chain is Probable chemoreceptor glutamine deamidase CheD 3 (170 aa).

It belongs to the CheD family.

It catalyses the reaction L-glutaminyl-[protein] + H2O = L-glutamyl-[protein] + NH4(+). Probably deamidates glutamine residues to glutamate on methyl-accepting chemotaxis receptors (MCPs), playing an important role in chemotaxis. This is Probable chemoreceptor glutamine deamidase CheD 3 from Dechloromonas aromatica (strain RCB).